A 461-amino-acid chain; its full sequence is MSVIKEYRTASEVVGPLMIVEQVNNVSYNELVEIQLHNGEIRRGQVLEIHEDKAMVQLFEGSSGINLEKSKIRFAGHALELAVSEDMVGRIFNGMGKPIDGGPDLIPEKYLDIDGQAINPVSRDYPDEFIQTGISSIDHLNTLVRGQKLPVFSGSGLPHNELAAQIARQATVLNSDENFAVVFAAMGITFEEAEFFMEELRKTGAIDRSVLFMNLANDPAIERIATPRIALTAAEYLAFEKDMHVLVIMTDMTNYCEALREVSAARREVPGRRGYPGYLYTNLSTLYERAGRLVGKKGSVTQIPILTMPEDDITHPIPDLTGYITEGQIILSHELYNQGYRPPINVLPSLSRLKDKGSGEGKTRGDHAPTMNQLFAAYAQGKKVEELAVVLGESALSDVDKLYVRFTKRFEEEYINQGFYKNRNIEDTLNLGWELLSILPRTELKRIKDDLLDKYLPLVEV.

Belongs to the ATPase alpha/beta chains family.

Produces ATP from ADP in the presence of a proton gradient across the membrane. The V-type beta chain is a regulatory subunit. The polypeptide is V-type ATP synthase beta chain (Streptococcus pneumoniae serotype 19F (strain G54)).